The sequence spans 219 residues: Ribose-5-phosphate isomerase A (219 aa).

Substrate-binding positions include 28 to 31, 81 to 84, and 94 to 97; these read TGST, DGAD, and KGGG. Glu-103 functions as the Proton acceptor in the catalytic mechanism. Lys-121 serves as a coordination point for substrate.

It belongs to the ribose 5-phosphate isomerase family. As to quaternary structure, homodimer.

The enzyme catalyses aldehydo-D-ribose 5-phosphate = D-ribulose 5-phosphate. It participates in carbohydrate degradation; pentose phosphate pathway; D-ribose 5-phosphate from D-ribulose 5-phosphate (non-oxidative stage): step 1/1. Catalyzes the reversible conversion of ribose-5-phosphate to ribulose 5-phosphate. The protein is Ribose-5-phosphate isomerase A of Salmonella choleraesuis (strain SC-B67).